The chain runs to 103 residues: Large ribosomal subunit protein uL23 (103 aa).

Belongs to the universal ribosomal protein uL23 family. As to quaternary structure, part of the 50S ribosomal subunit. Contacts protein L29, and trigger factor when it is bound to the ribosome.

Its function is as follows. One of the early assembly proteins it binds 23S rRNA. One of the proteins that surrounds the polypeptide exit tunnel on the outside of the ribosome. Forms the main docking site for trigger factor binding to the ribosome. This Prochlorococcus marinus (strain NATL1A) protein is Large ribosomal subunit protein uL23.